Here is a 1181-residue protein sequence, read N- to C-terminus: Lysine-specific demethylase hairless (1181 aa).

A compositionally biased stretch (pro residues) spans 311–323 (TPRCPSPGPPTPP). Disordered regions lie at residues 311–378 (TPRC…HTKL), 413–472 (AGSP…DGRI), and 509–543 (SHSQ…PEAS). The span at 347–357 (SPEGSSSGPGE) shows a compositional bias: low complexity. Over residues 447–461 (TPETSTGSKAEAQQQ) the composition is skewed to polar residues. Residues 462–472 (EEQRGPRDGRI) are compositionally biased toward basic and acidic residues. Residues 560-564 (LCRLL) carry the LXXLL motif 1 motif. A C6-type zinc finger spans residues 594–619 (CSRCHHGLFNTHWRCSHCSHRLCVAC). The interval 696 to 745 (GDGGQQKEPTEKTPPAPQLSCNGDSNRTKDIKEETPDSTESPAEDRAGRS) is disordered. Basic and acidic residues predominate over residues 721-730 (NRTKDIKEET). Residues 752–756 (LCELL) carry the LXXLL motif 2 motif. The JmjC domain occupies 938–1149 (DESRVENLAS…LSAQLCHQGA (212 aa)). Positions 999, 1001, and 1117 each coordinate Fe cation.

Fe(2+) serves as cofactor.

The protein localises to the nucleus. The enzyme catalyses N(6),N(6)-dimethyl-L-lysyl(9)-[histone H3] + 2 2-oxoglutarate + 2 O2 = L-lysyl(9)-[histone H3] + 2 formaldehyde + 2 succinate + 2 CO2. In terms of biological role, histone demethylase that specifically demethylates both mono- and dimethylated 'Lys-9' of histone H3. May act as a transcription regulator controlling hair biology (via targeting of collagens), neural activity, and cell cycle. The polypeptide is Lysine-specific demethylase hairless (Hr) (Rattus norvegicus (Rat)).